Here is a 367-residue protein sequence, read N- to C-terminus: uncharacterized protein (367 aa).

A helical membrane pass occupies residues Ile-6–Gly-26.

To E.coli YdgA and YihF.

It is found in the membrane. This is an uncharacterized protein from Haemophilus influenzae (strain ATCC 51907 / DSM 11121 / KW20 / Rd).